The chain runs to 1913 residues: Protein TIC 214 (1913 aa).

The next 5 helical transmembrane spans lie at 18 to 38 (IINS…FSIG), 64 to 84 (FITG…HLAL), 124 to 144 (LSIQ…HLML), 172 to 192 (VGWL…VSWI), and 214 to 234 (LKSA…VNYL). Disordered stretches follow at residues 245-330 (KLNE…ETEE), 707-734 (YTDK…NSDT), and 1605-1652 (EKED…RKKK). The span at 260 to 289 (KESQKSKESEEERDVEKETTSETKETKQEQ) shows a compositional bias: basic and acidic residues. The span at 303–314 (EKEDPDKIDETE) shows a compositional bias: acidic residues. Basic and acidic residues predominate over residues 315–330 (EIRVNGKEKKKDETEE). The segment covering 718 to 729 (PNPNTDNTTTEN) has biased composition (low complexity).

This sequence belongs to the TIC214 family. Part of the Tic complex.

The protein resides in the plastid. It is found in the chloroplast inner membrane. Its function is as follows. Involved in protein precursor import into chloroplasts. May be part of an intermediate translocation complex acting as a protein-conducting channel at the inner envelope. The polypeptide is Protein TIC 214 (Acorus calamus var. americanus (American sweet flag)).